Reading from the N-terminus, the 501-residue chain is Cytochrome P450 90A3 (501 aa).

Residues 2–22 (AAAALLLLAAAAAIVVVAMVL) traverse the membrane as a helical segment. Position 446 (Cys-446) interacts with heme.

Belongs to the cytochrome P450 family. Requires heme as cofactor. Highly expressed in shoot apex and inflorenscence. Expressed in roots, stems, leaf blades and leaf sheaths.

Its subcellular location is the membrane. The protein operates within plant hormone biosynthesis; brassinosteroid biosynthesis. Catalyzes the C23-alpha-hydroxylation step in brassinosteroid biosynthesis. Converts 6-deoxocathasterone (6-deoxoCT) to 6-deoxoteasterone (6-deoxoTE) in the late C6-oxidation pathway and cathasterone (CT) to teasterone (TE) in the early C6-oxidation pathway of brassinolide (BL) biosynthesis. This is Cytochrome P450 90A3 from Oryza sativa subsp. japonica (Rice).